The chain runs to 687 residues: Protein SDA1 homolog (687 aa).

Disordered regions lie at residues 517 to 549, 561 to 587, and 615 to 687; these read SSDE…SQMR, MKQL…EPQG, and TVIA…KSKI. Over residues 520–537 the composition is skewed to acidic residues; sequence EEQEDEDPSGENQEGEED. Residues 644-666 are compositionally biased toward basic residues; sequence EKRRKKNFMMMRHNKLVRGKTKR. The segment covering 667–680 has biased composition (basic and acidic residues); that stretch reads SFRDKQIALRDSLL.

Belongs to the SDA1 family.

Its subcellular location is the nucleus. The protein resides in the nucleolus. Its function is as follows. Required for 60S pre-ribosomal subunits export to the cytoplasm. In Nematostella vectensis (Starlet sea anemone), this protein is Protein SDA1 homolog (sdad1).